A 375-amino-acid chain; its full sequence is Cytochrome P450 monooxygenase ACRTS1 (375 aa).

Cys321 is a heme binding site.

This sequence belongs to the cytochrome P450 family. Heme serves as cofactor.

It functions in the pathway mycotoxin biosynthesis. Cytochrome P450 monooxygenase; part of the gene cluster that mediates the biosynthesis of the host-selective toxins (HSTs) ACR-toxins responsible for brown spot of rough lemon disease by the rough lemon pathotype. ACR-toxins cause uncoupling of mitochondrial oxidative-phosphorylation similar to that of classic protonophore. The structure of the major form of ACR-toxin (ACR-toxin I) consists of an alpha-dihydropyrone ring in a 19-carbon polyalcohol, a typical polyketide structure. Minor toxins were characterized as having a pyrone ring with polyalcohol side chains different in length and showing weaker toxicity. The highly reducing polyketide synthase ACRTS2 has all necessary enzymatic domains for multiple cycles of condensation and beta-keto processing. The cytochrome P450 monooxygenase ACRTS1 has also been shown to be essential for ACR-toxin biosynthesis, however its exact role in the pathway has not been elucidated yet. This is Cytochrome P450 monooxygenase ACRTS1 from Alternaria alternata (Alternaria rot fungus).